The following is a 385-amino-acid chain: MPSKNDLLSFRSEINNIDKNIVQLLAKRKKLVLNIAESKIKNNQPIRDIEREKILLEKLTNLGKKNNLNTNYITRLFQLIIEESVLTQKKLLNKFCNDNNLDLASFSFLGPKGSYSHIAASQYAEQNFKTCIENACLSFNEVIQSVENNQTDYAVLPIENSCSGFINEIFDILKKTNLFIIGEINISINHCLLAIKKIELNKIKAVYSHPQPFQQCSYFIKKFPNWKIQYTNSTADAMKKIVKYNITTNAALGSELGSKIYGLKVLYKNLANKKKNITRFILLSRKPVSISSKIPTKTTLIFNTGQESGALAEVLLILKKNKLIMKKLTSQNIYKNPWEEMFYIDVQANLSSSLMQETLEKIGKITKFIKILGCYPSENITPIIP.

A Chorismate mutase domain is found at Met-1 to Leu-92. Arg-11, Arg-28, Lys-39, Asp-48, Glu-52, Ser-84, and Gln-88 together coordinate substrate. One can recognise a Prephenate dehydratase domain in the interval Ser-105–Arg-285. The segment at Lys-286–Pro-385 is regulatory. Residues Thr-299–Pro-376 form the ACT domain.

It is found in the cytoplasm. It catalyses the reaction chorismate = prephenate. The catalysed reaction is prephenate + H(+) = 3-phenylpyruvate + CO2 + H2O. It participates in amino-acid biosynthesis; L-phenylalanine biosynthesis; phenylpyruvate from prephenate: step 1/1. It functions in the pathway metabolic intermediate biosynthesis; prephenate biosynthesis; prephenate from chorismate: step 1/1. Catalyzes the Claisen rearrangement of chorismate to prephenate and the decarboxylation/dehydration of prephenate to phenylpyruvate. This is Bifunctional chorismate mutase/prephenate dehydratase (pheA) from Buchnera aphidicola subsp. Schizaphis graminum (strain Sg).